We begin with the raw amino-acid sequence, 210 residues long: Large ribosomal subunit protein uL3 (210 aa).

The disordered stretch occupies residues 133 to 152 (ATHGNSLSHRVHGSTGQNQT). At Q151 the chain carries N5-methylglutamine.

This sequence belongs to the universal ribosomal protein uL3 family. Part of the 50S ribosomal subunit. Forms a cluster with proteins L14 and L19. In terms of processing, methylated by PrmB.

Its function is as follows. One of the primary rRNA binding proteins, it binds directly near the 3'-end of the 23S rRNA, where it nucleates assembly of the 50S subunit. The polypeptide is Large ribosomal subunit protein uL3 (Francisella philomiragia subsp. philomiragia (strain ATCC 25017 / CCUG 19701 / FSC 153 / O#319-036)).